Here is a 463-residue protein sequence, read N- to C-terminus: Methionine aminopeptidase 2-1 (463 aa).

Residues 1 to 98 (MGSKTPEEQI…PPRVPLSDLF (98 aa)) form a disordered region. The span at 30–45 (RGTHLSRDGDGSLGDH) shows a compositional bias: basic and acidic residues. Residues 46 to 55 (GDDDDADEDD) are compositionally biased toward acidic residues. A compositionally biased stretch (basic residues) spans 69-81 (KKKKRPKKKKKPA). His-214 lines the substrate pocket. Residues Asp-235, Asp-246, and His-315 each coordinate a divalent metal cation. Residue His-323 participates in substrate binding. Positions 348 and 444 each coordinate a divalent metal cation.

This sequence belongs to the peptidase M24A family. Methionine aminopeptidase eukaryotic type 2 subfamily. Co(2+) serves as cofactor. It depends on Zn(2+) as a cofactor. Requires Mn(2+) as cofactor. Fe(2+) is required as a cofactor.

The protein resides in the cytoplasm. The catalysed reaction is Release of N-terminal amino acids, preferentially methionine, from peptides and arylamides.. Cotranslationally removes the N-terminal methionine from nascent proteins. The N-terminal methionine is often cleaved when the second residue in the primary sequence is small and uncharged (Met-Ala-, Cys, Gly, Pro, Ser, Thr, or Val). The chain is Methionine aminopeptidase 2-1 from Colletotrichum graminicola (strain M1.001 / M2 / FGSC 10212) (Maize anthracnose fungus).